A 172-amino-acid polypeptide reads, in one-letter code: Peptide deformylase 1 (172 aa).

The Fe cation site is built by C91 and H133. E134 is a catalytic residue. Fe cation is bound at residue H137.

The protein belongs to the polypeptide deformylase family. It depends on Fe(2+) as a cofactor.

The enzyme catalyses N-terminal N-formyl-L-methionyl-[peptide] + H2O = N-terminal L-methionyl-[peptide] + formate. Removes the formyl group from the N-terminal Met of newly synthesized proteins. Requires at least a dipeptide for an efficient rate of reaction. N-terminal L-methionine is a prerequisite for activity but the enzyme has broad specificity at other positions. The polypeptide is Peptide deformylase 1 (Vibrio parahaemolyticus serotype O3:K6 (strain RIMD 2210633)).